The following is a 426-amino-acid chain: Serine--tRNA ligase (426 aa).

233-235 (TAE) is a binding site for L-serine. An ATP-binding site is contributed by 264–266 (RSE). An L-serine-binding site is contributed by glutamate 287. 351 to 354 (EISS) contacts ATP. Residue serine 387 coordinates L-serine.

This sequence belongs to the class-II aminoacyl-tRNA synthetase family. Type-1 seryl-tRNA synthetase subfamily. As to quaternary structure, homodimer. The tRNA molecule binds across the dimer.

It is found in the cytoplasm. The enzyme catalyses tRNA(Ser) + L-serine + ATP = L-seryl-tRNA(Ser) + AMP + diphosphate + H(+). It carries out the reaction tRNA(Sec) + L-serine + ATP = L-seryl-tRNA(Sec) + AMP + diphosphate + H(+). It participates in aminoacyl-tRNA biosynthesis; selenocysteinyl-tRNA(Sec) biosynthesis; L-seryl-tRNA(Sec) from L-serine and tRNA(Sec): step 1/1. Catalyzes the attachment of serine to tRNA(Ser). Is also able to aminoacylate tRNA(Sec) with serine, to form the misacylated tRNA L-seryl-tRNA(Sec), which will be further converted into selenocysteinyl-tRNA(Sec). In Clostridium botulinum (strain Okra / Type B1), this protein is Serine--tRNA ligase.